We begin with the raw amino-acid sequence, 356 residues long: MTRQTTSQTCLICGDSADSLHFGALSCRACAAFFRRKVAGRRNIFRRCDRQCKVDTGMRKLCASCRYDKCLKVGMRESAVLSRLAKKNQNYKKSIVGSPDAYEPSTSTSDSVLENLQSAYHKLEETRKRVFNISETHVSQCCNYKRMNDVFFEDIKLVMEHLLETFKKSDISQEQEKLLCVHFMVPFILFEGGYKSTNSDLFYLPSGDFIDENRIEEYYSNPDDQNDNSAKSAAEVFRPYWKLNKQTLKTHLDDVQLDLPEFLFITALIYFDDGLLDQNEECIEVCKQMKAKIIEELTDYEKNVRINEDHSYRVGQIIMVLHGIQRTMNMIHETKEISLVYNVYDMHSSIFGNMAE.

Residues 7-82 constitute a DNA-binding region (nuclear receptor); sequence SQTCLICGDS…VGMRESAVLS (76 aa). An NR C4-type zinc finger spans residues 10–30; sequence CLICGDSADSLHFGALSCRAC. The NR C4-type; atypical zinc-finger motif lies at 48-70; it reads CDRQCKVDTGMRKLCASCRYDKC. One can recognise an NR LBD domain in the interval 108-356; that stretch reads TSDSVLENLQ…HSSIFGNMAE (249 aa).

The protein belongs to the nuclear hormone receptor family.

It localises to the nucleus. Orphan nuclear receptor. The protein is Nuclear hormone receptor family member nhr-42 (nhr-42) of Caenorhabditis elegans.